The chain runs to 31 residues: Cytochrome b6-f complex subunit 6 (31 aa).

The chain crosses the membrane as a helical span at residues 4–24 (LLSYFGLLLAALISTLVLFIG).

Belongs to the PetL family. The 4 large subunits of the cytochrome b6-f complex are cytochrome b6, subunit IV (17 kDa polypeptide, PetD), cytochrome f and the Rieske protein, while the 4 small subunits are PetG, PetL, PetM and PetN. The complex functions as a dimer.

It localises to the plastid. It is found in the chloroplast thylakoid membrane. Its function is as follows. Component of the cytochrome b6-f complex, which mediates electron transfer between photosystem II (PSII) and photosystem I (PSI), cyclic electron flow around PSI, and state transitions. PetL is important for photoautotrophic growth as well as for electron transfer efficiency and stability of the cytochrome b6-f complex. This is Cytochrome b6-f complex subunit 6 from Psilotum nudum (Whisk fern).